A 184-amino-acid chain; its full sequence is Cytosolic Prostaglandin E synthase (184 aa).

Positions 7–96 (LIPPPVSWAQ…AAGPYWSSLT (90 aa)) constitute a CS domain. A disordered region spans residues 115–184 (ESDDEEGDQK…EGDKEKKPAA (70 aa)). Residues Ser116, Ser127, Ser135, Ser156, and Ser162 each carry the phosphoserine modification. Positions 147–158 (FNVDDEEEDSDD) are enriched in acidic residues. Residues 175 to 184 (EGDKEKKPAA) show a composition bias toward basic and acidic residues.

This sequence belongs to the p23/wos2 family.

The protein resides in the cytoplasm. The enzyme catalyses prostaglandin H2 = prostaglandin E2. Cytosolic prostaglandin synthase that catalyzes the oxidoreduction of prostaglandin endoperoxide H2 (PGH2) to prostaglandin E2 (PGE2). Through production of PGE2 may regulate the activity of non-muscle myosin II in an autocrine or paracrine fashion; this may influence border cell and nurse cell stiffness to facilitate border cell migration during oogenesis. This chain is Cytosolic Prostaglandin E synthase, found in Drosophila melanogaster (Fruit fly).